A 288-amino-acid chain; its full sequence is Geranylgeranyl diphosphate synthase (288 aa).

Isopentenyl diphosphate-binding residues include Arg-43 and His-73. 2 residues coordinate Mg(2+): Asp-80 and Asp-86. (2E,6E)-farnesyl diphosphate is bound at residue Arg-91. Arg-92 is a binding site for isopentenyl diphosphate. Lys-170, Thr-171, and Gln-205 together coordinate (2E,6E)-farnesyl diphosphate.

Belongs to the FPP/GGPP synthase family. The cofactor is Mg(2+).

It catalyses the reaction isopentenyl diphosphate + (2E,6E)-farnesyl diphosphate = (2E,6E,10E)-geranylgeranyl diphosphate + diphosphate. The protein operates within isoprenoid biosynthesis; geranylgeranyl diphosphate biosynthesis; geranylgeranyl diphosphate from farnesyl diphosphate and isopentenyl diphosphate: step 1/1. In terms of biological role, catalyzes the condensation of farnesyl diphosphate (FPP) and isopentenyl diphosphate (IPP) to yield geranylgeranyl diphosphate (GGPP) needed for biosynthesis of carotenoids and diterpenes. In Cereibacter sphaeroides (strain ATCC 17023 / DSM 158 / JCM 6121 / CCUG 31486 / LMG 2827 / NBRC 12203 / NCIMB 8253 / ATH 2.4.1.) (Rhodobacter sphaeroides), this protein is Geranylgeranyl diphosphate synthase (crtE).